The chain runs to 208 residues: uncharacterized protein (208 aa).

The span at 1 to 18 shows a compositional bias: basic and acidic residues; the sequence is MSPTKDSHPSPHFPRDSG. 2 disordered regions span residues 1 to 122 and 135 to 208; these read MSPT…LPPP and RECH…TPDG.

This is an uncharacterized protein from Homo sapiens (Human).